The chain runs to 248 residues: Gas vesicle protein J (248 aa).

The 1; truncated repeat unit spans residues 121–140; sequence DVKDDLYQTSAKIPSPVDTP. The interval 121–245 is 6 X 21 AA approximate tandem repeats; it reads DVKDDLYQTS…EEIPSSVDPA (125 aa). 5 tandem repeats follow at residues 141–161, 162–182, 183–203, 204–224, and 225–245.

Belongs to the gas vesicle GvpA family. As to quaternary structure, interacts with GvpA.

The protein localises to the gas vesicle. A minor component of the gas vesicle, might be involved in nucleating gas vesicle formation. Gas vesicles (GV) are hollow, gas filled proteinaceous nanostructures. During planktonic growth they allow positioning of the organism at a favorable depth for light or nutrient acquisition. The polypeptide is Gas vesicle protein J (Dolichospermum flosaquae (Anabaena flos-aquae)).